The sequence spans 128 residues: MNHIIETKDAPKPIGPYSQALKIDNFIILSGQIPIDVISNQIPENIAEQTYLVLKNIKLILVHAKFQVHNIIKTTVFTTDLKKINIINEIYKKFFIDNKSNFPARSCVEVQKLPKNVKIEIEAMAFKK.

Belongs to the RutC family.

In Buchnera aphidicola subsp. Acyrthosiphon pisum (strain APS) (Acyrthosiphon pisum symbiotic bacterium), this protein is RutC family protein BU371.